A 321-amino-acid chain; its full sequence is Glutaminase (321 aa).

Serine 69, asparagine 120, glutamate 165, asparagine 172, tyrosine 196, tyrosine 248, and valine 266 together coordinate substrate.

Belongs to the glutaminase family. As to quaternary structure, homotetramer.

The catalysed reaction is L-glutamine + H2O = L-glutamate + NH4(+). This Bacteroides thetaiotaomicron (strain ATCC 29148 / DSM 2079 / JCM 5827 / CCUG 10774 / NCTC 10582 / VPI-5482 / E50) protein is Glutaminase.